The following is a 1132-amino-acid chain: Error-prone DNA polymerase (1132 aa).

Belongs to the DNA polymerase type-C family. DnaE2 subfamily.

Its subcellular location is the cytoplasm. The catalysed reaction is DNA(n) + a 2'-deoxyribonucleoside 5'-triphosphate = DNA(n+1) + diphosphate. Its function is as follows. DNA polymerase involved in damage-induced mutagenesis and translesion synthesis (TLS). It is not the major replicative DNA polymerase. The sequence is that of Error-prone DNA polymerase from Anaeromyxobacter dehalogenans (strain 2CP-C).